A 49-amino-acid chain; its full sequence is Large ribosomal subunit protein bL33B (49 aa).

This sequence belongs to the bacterial ribosomal protein bL33 family.

The sequence is that of Large ribosomal subunit protein bL33B from Acholeplasma laidlawii (strain PG-8A).